A 379-amino-acid polypeptide reads, in one-letter code: Dual-specificity RNA methyltransferase RlmN (379 aa).

Glu-90 acts as the Proton acceptor in catalysis. The region spanning 96-348 (EPSRGTLCVS…TTVRKTRGDD (253 aa)) is the Radical SAM core domain. A disulfide bond links Cys-103 and Cys-353. [4Fe-4S] cluster-binding residues include Cys-110, Cys-114, and Cys-117. Residues 179–180 (GE), Ser-211, 233–235 (SLH), and Asn-310 contribute to the S-adenosyl-L-methionine site. Cys-353 (S-methylcysteine intermediate) is an active-site residue.

Belongs to the radical SAM superfamily. RlmN family. [4Fe-4S] cluster is required as a cofactor.

The protein resides in the cytoplasm. It catalyses the reaction adenosine(2503) in 23S rRNA + 2 reduced [2Fe-2S]-[ferredoxin] + 2 S-adenosyl-L-methionine = 2-methyladenosine(2503) in 23S rRNA + 5'-deoxyadenosine + L-methionine + 2 oxidized [2Fe-2S]-[ferredoxin] + S-adenosyl-L-homocysteine. The enzyme catalyses adenosine(37) in tRNA + 2 reduced [2Fe-2S]-[ferredoxin] + 2 S-adenosyl-L-methionine = 2-methyladenosine(37) in tRNA + 5'-deoxyadenosine + L-methionine + 2 oxidized [2Fe-2S]-[ferredoxin] + S-adenosyl-L-homocysteine. Its function is as follows. Specifically methylates position 2 of adenine 2503 in 23S rRNA and position 2 of adenine 37 in tRNAs. m2A2503 modification seems to play a crucial role in the proofreading step occurring at the peptidyl transferase center and thus would serve to optimize ribosomal fidelity. This is Dual-specificity RNA methyltransferase RlmN from Nitrosomonas europaea (strain ATCC 19718 / CIP 103999 / KCTC 2705 / NBRC 14298).